We begin with the raw amino-acid sequence, 614 residues long: 4-hydroxy-3-methylbut-2-en-1-yl diphosphate synthase (flavodoxin) (614 aa).

Positions 522, 525, 556, and 563 each coordinate [4Fe-4S] cluster.

Belongs to the IspG family. [4Fe-4S] cluster is required as a cofactor.

The catalysed reaction is (2E)-4-hydroxy-3-methylbut-2-enyl diphosphate + oxidized [flavodoxin] + H2O + 2 H(+) = 2-C-methyl-D-erythritol 2,4-cyclic diphosphate + reduced [flavodoxin]. The protein operates within isoprenoid biosynthesis; isopentenyl diphosphate biosynthesis via DXP pathway; isopentenyl diphosphate from 1-deoxy-D-xylulose 5-phosphate: step 5/6. Functionally, converts 2C-methyl-D-erythritol 2,4-cyclodiphosphate (ME-2,4cPP) into 1-hydroxy-2-methyl-2-(E)-butenyl 4-diphosphate. The protein is 4-hydroxy-3-methylbut-2-en-1-yl diphosphate synthase (flavodoxin) of Phocaeicola vulgatus (strain ATCC 8482 / DSM 1447 / JCM 5826 / CCUG 4940 / NBRC 14291 / NCTC 11154) (Bacteroides vulgatus).